A 328-amino-acid polypeptide reads, in one-letter code: RING finger protein 175 (328 aa).

The next 5 helical transmembrane spans lie at 51–71 (MHVE…IVLV), 83–103 (LVTL…LYWW), 104–121 (RFLS…YILF), 149–169 (AFGV…NLFF), and 180–200 (GIVS…FAEI). The RING-type; atypical zinc-finger motif lies at 227–277 (CAVCGQKIIVELDEEGLIENTYQLSCNHVFHEFCIRGWCIVGKKQTCPYCK).

The protein resides in the membrane. This is RING finger protein 175 (RNF175) from Homo sapiens (Human).